A 266-amino-acid polypeptide reads, in one-letter code: Arcelin-4 (266 aa).

Positions 1-21 (MGSSKLLSLALLLVLLTHANS) are cleaved as a signal peptide. Residues Asn-28 and Asn-92 are each glycosylated (N-linked (GlcNAc...) asparagine).

The protein belongs to the leguminous lectin family.

Seed storage. This carbohydrate-binding lectin has toxic effects on the important bean bruchid pests, Z.subfasciatus and A.obtectus. The polypeptide is Arcelin-4 (ARC4) (Phaseolus vulgaris (Kidney bean)).